Here is a 140-residue protein sequence, read N- to C-terminus: FlaA locus uncharacterized protein YlxG (140 aa).

Positions 1 to 21 (MTSISSEYKLPEKTNTVSTNN) are disordered.

Belongs to the FlgD family.

The polypeptide is FlaA locus uncharacterized protein YlxG (ylxG) (Bacillus subtilis (strain 168)).